The following is a 1028-amino-acid chain: Pentatricopeptide repeat-containing protein At3g09040, mitochondrial (1028 aa).

The N-terminal 30 residues, Met-1–Gly-30, are a transit peptide targeting the mitochondrion. PPR repeat units lie at residues Glu-94 to Lys-123, Asp-124 to Pro-158, Asn-159 to Arg-193, Asn-194 to Pro-224, Asn-225 to Pro-259, Asp-260 to Pro-290, Asp-291 to Ser-325, Thr-326 to Ser-360, Asn-361 to Lys-391, Asn-392 to Ile-426, Asp-427 to Lys-461, Asn-462 to Arg-492, Asp-493 to Ser-527, Asp-528 to Arg-562, Asp-563 to Trp-593, Ser-594 to Pro-627, Ser-628 to Ser-662, Gly-664 to Pro-694, Ser-696 to Pro-730, Asp-731 to Leu-765, Asp-766 to Arg-796, Asn-798 to Pro-832, Asp-833 to Gln-863, and Arg-869 to Lys-899. A type E motif region spans residues Leu-904–Glu-979. The type E(+) motif stretch occupies residues Gln-980–Lys-1010.

The protein belongs to the PPR family. PCMP-E subfamily.

The protein resides in the mitochondrion. The chain is Pentatricopeptide repeat-containing protein At3g09040, mitochondrial (PCMP-E88) from Arabidopsis thaliana (Mouse-ear cress).